The chain runs to 313 residues: MGHNHNHAGGSNKKVLLISFIMITGYMIIEAIGGFLTNSLALLSDAGHMLSDSISLMVALIAFKLAEKKASHHKTFGYKRFEILAAVINGVALILISLYIIYEAIKRFSHPPEVATTGMLTISIIGLAVNILVAWIMLNGGDTKNNLNIRGAYLHVISDMLGSIGAILAAILIIFFGWSWADPAASVIVAILVLRSGYHVTKDSIHVLMEGTPGNIDVTDIIHTIEETEGIQSIHDLHIWSITSGLNALSCHAVVNDQLTISESESILRKIEHELGDKGITHVTIQMETAAHNHDNTILCQSQTENPRDHHHH.

Over 1-14 (MGHNHNHAGGSNKK) the chain is Extracellular. A helical membrane pass occupies residues 15–35 (VLLISFIMITGYMIIEAIGGF). Residues 36-45 (LTNSLALLSD) lie on the Cytoplasmic side of the membrane. The helical transmembrane segment at 46–66 (AGHMLSDSISLMVALIAFKLA) threads the bilayer. Over 67-80 (EKKASHHKTFGYKR) the chain is Extracellular. Residues 81 to 101 (FEILAAVINGVALILISLYII) traverse the membrane as a helical segment. The Cytoplasmic segment spans residues 102–117 (YEAIKRFSHPPEVATT). The helical transmembrane segment at 118-138 (GMLTISIIGLAVNILVAWIML) threads the bilayer. Residues 139–159 (NGGDTKNNLNIRGAYLHVISD) lie on the Extracellular side of the membrane. A helical transmembrane segment spans residues 160-180 (MLGSIGAILAAILIIFFGWSW). Over 181-313 (ADPAASVIVA…TENPRDHHHH (133 aa)) the chain is Cytoplasmic.

Belongs to the cation diffusion facilitator (CDF) transporter (TC 2.A.4) family. SLC30A subfamily.

It localises to the cell membrane. Involved in divalent cation and potassium homeostasis in the cell. Catalyzes the active efflux of zinc, cadmium and cobalt, in exchange for potassium and H(+) ions. The chain is Cadmium, cobalt and zinc/H(+)-K(+) antiporter (czcD) from Bacillus velezensis (strain DSM 23117 / BGSC 10A6 / LMG 26770 / FZB42) (Bacillus amyloliquefaciens subsp. plantarum).